The sequence spans 192 residues: Recombination protein RecR (192 aa).

The C4-type zinc-finger motif lies at 51-66 (CQTCFHLSADPECEIC). The Toprim domain maps to 74 to 168 (GLICVVADSR…PVSRIAYGLP (95 aa)).

The protein belongs to the RecR family.

In terms of biological role, may play a role in DNA repair. It seems to be involved in an RecBC-independent recombinational process of DNA repair. It may act with RecF and RecO. This is Recombination protein RecR from Parasynechococcus marenigrum (strain WH8102).